Consider the following 77-residue polypeptide: Putative sulfur carrier protein YedF (77 aa).

Catalysis depends on Cys-17, which acts as the Cysteine persulfide intermediate.

The protein belongs to the sulfur carrier protein TusA family.

In Escherichia coli O157:H7, this protein is Putative sulfur carrier protein YedF (yedF).